The following is a 221-amino-acid chain: Ribosome maturation factor RimM (221 aa).

The disordered stretch occupies residues 1–23 (MTERKQGAAAPRPLNRPQGESPK). Residues 144–221 (ENEFYWVDLI…RIVVDWGLDY (78 aa)) form the PRC barrel domain.

The protein belongs to the RimM family. As to quaternary structure, binds ribosomal protein uS19.

Its subcellular location is the cytoplasm. Functionally, an accessory protein needed during the final step in the assembly of 30S ribosomal subunit, possibly for assembly of the head region. Essential for efficient processing of 16S rRNA. May be needed both before and after RbfA during the maturation of 16S rRNA. It has affinity for free ribosomal 30S subunits but not for 70S ribosomes. This chain is Ribosome maturation factor RimM, found in Cupriavidus pinatubonensis (strain JMP 134 / LMG 1197) (Cupriavidus necator (strain JMP 134)).